Here is a 277-residue protein sequence, read N- to C-terminus: MPIVKVKPTSAGRRAVVKVVNPDLHKGAPHAALVEKKNSTGGRNHNGHITTRHRGGGHKKHYRLIDFRRNKDGIPAKVERIEYDPNRTAHIALLCYADGERRYIIAPRGVKVGAVLLSGSEAPIKAGNALPIRNIPVGTTIHCVEMQPGKGAQMVRSAGASAMLLAREGVYAQLRLRSGEIRLVHVDCRATVGEVGNEEHSLRKLGKAGATRWRGIRPTVRGTAMNPIDHPHGGGEGRTGEGRVPVSPWGTPAKGFRTRRNKRTDNMIVRRRYSNKG.

Disordered regions lie at residues 37-59 (KNST…GGHK) and 221-265 (RGTA…KRTD). Basic residues predominate over residues 50 to 59 (TTRHRGGGHK). Basic and acidic residues predominate over residues 229–241 (DHPHGGGEGRTGE).

This sequence belongs to the universal ribosomal protein uL2 family. In terms of assembly, part of the 50S ribosomal subunit. Forms a bridge to the 30S subunit in the 70S ribosome.

Its function is as follows. One of the primary rRNA binding proteins. Required for association of the 30S and 50S subunits to form the 70S ribosome, for tRNA binding and peptide bond formation. It has been suggested to have peptidyltransferase activity; this is somewhat controversial. Makes several contacts with the 16S rRNA in the 70S ribosome. The chain is Large ribosomal subunit protein uL2 from Chromobacterium violaceum (strain ATCC 12472 / DSM 30191 / JCM 1249 / CCUG 213 / NBRC 12614 / NCIMB 9131 / NCTC 9757 / MK).